The chain runs to 489 residues: Glutamate--tRNA ligase (489 aa).

Positions 11–21 match the 'HIGH' region motif; the sequence is PSPTGHLHIGG. Cysteine 108, cysteine 110, cysteine 136, and histidine 138 together coordinate Zn(2+). The 'KMSKS' region motif lies at 253–257; it reads KLSKR. Lysine 256 contributes to the ATP binding site.

This sequence belongs to the class-I aminoacyl-tRNA synthetase family. Glutamate--tRNA ligase type 1 subfamily. In terms of assembly, monomer. The cofactor is Zn(2+).

Its subcellular location is the cytoplasm. It carries out the reaction tRNA(Glu) + L-glutamate + ATP = L-glutamyl-tRNA(Glu) + AMP + diphosphate. In terms of biological role, catalyzes the attachment of glutamate to tRNA(Glu) in a two-step reaction: glutamate is first activated by ATP to form Glu-AMP and then transferred to the acceptor end of tRNA(Glu). The sequence is that of Glutamate--tRNA ligase from Geobacillus thermodenitrificans (strain NG80-2).